Consider the following 338-residue polypeptide: Aspartate carbamoyltransferase catalytic subunit (338 aa).

Positions 59 and 60 each coordinate carbamoyl phosphate. K87 is a binding site for L-aspartate. 3 residues coordinate carbamoyl phosphate: R109, H142, and Q145. Positions 182 and 253 each coordinate L-aspartate. Carbamoyl phosphate contacts are provided by G294 and P295.

The protein belongs to the aspartate/ornithine carbamoyltransferase superfamily. ATCase family. As to quaternary structure, heterododecamer (2C3:3R2) of six catalytic PyrB chains organized as two trimers (C3), and six regulatory PyrI chains organized as three dimers (R2).

It carries out the reaction carbamoyl phosphate + L-aspartate = N-carbamoyl-L-aspartate + phosphate + H(+). It participates in pyrimidine metabolism; UMP biosynthesis via de novo pathway; (S)-dihydroorotate from bicarbonate: step 2/3. Functionally, catalyzes the condensation of carbamoyl phosphate and aspartate to form carbamoyl aspartate and inorganic phosphate, the committed step in the de novo pyrimidine nucleotide biosynthesis pathway. This Prochlorococcus marinus (strain MIT 9515) protein is Aspartate carbamoyltransferase catalytic subunit.